The following is a 525-amino-acid chain: tRNA-splicing endonuclease subunit Sen54 (525 aa).

Met1 is modified (N-acetylmethionine). The segment at 1-46 (MEPEPEPGSVEVPAGRVLSASELRAARSRSQKLPQRSHGPKDFLPD) is disordered. Over residues 7-23 (PGSVEVPAGRVLSASEL) the composition is skewed to low complexity. A Phosphoserine modification is found at Ser178. A Phosphotyrosine modification is found at Tyr180. The segment covering 220–232 (LPPVSLAASSSPA) has biased composition (low complexity). The segment at 220–273 (LPPVSLAASSSPACDQSSQYPEEKSQDSSPRQGSELPLQFLGSSEPCSDLARED) is disordered.

Belongs to the SEN54 family. TRNA splicing endonuclease is a heterotetramer composed of TSEN2, TSEN15, TSEN34/LENG5 and TSEN54. tRNA splicing endonuclease complex also contains proteins of the pre-mRNA 3'-end processing machinery such as CLP1, CPSF1, CPSF4 and CSTF2.

The protein resides in the nucleus. Its subcellular location is the nucleolus. Non-catalytic subunit of the tRNA-splicing endonuclease complex, a complex responsible for identification and cleavage of the splice sites in pre-tRNA. It cleaves pre-tRNA at the 5' and 3' splice sites to release the intron. The products are an intron and two tRNA half-molecules bearing 2',3' cyclic phosphate and 5'-OH termini. There are no conserved sequences at the splice sites, but the intron is invariably located at the same site in the gene, placing the splice sites an invariant distance from the constant structural features of the tRNA body. The tRNA splicing endonuclease is also involved in mRNA processing via its association with pre-mRNA 3'-end processing factors, establishing a link between pre-tRNA splicing and pre-mRNA 3'-end formation, suggesting that the endonuclease subunits function in multiple RNA-processing events. This Mus musculus (Mouse) protein is tRNA-splicing endonuclease subunit Sen54 (Tsen54).